Consider the following 426-residue polypeptide: Glucose-6-phosphate isomerase (426 aa).

E282 acts as the Proton donor in catalysis. Catalysis depends on residues H303 and K417.

The protein belongs to the GPI family.

The protein resides in the cytoplasm. It carries out the reaction alpha-D-glucose 6-phosphate = beta-D-fructose 6-phosphate. The protein operates within carbohydrate biosynthesis; gluconeogenesis. Its pathway is carbohydrate degradation; glycolysis; D-glyceraldehyde 3-phosphate and glycerone phosphate from D-glucose: step 2/4. Catalyzes the reversible isomerization of glucose-6-phosphate to fructose-6-phosphate. The chain is Glucose-6-phosphate isomerase from Aster yellows witches'-broom phytoplasma (strain AYWB).